Reading from the N-terminus, the 67-residue chain is Large ribosomal subunit protein uL29 (67 aa).

Belongs to the universal ribosomal protein uL29 family.

This is Large ribosomal subunit protein uL29 from Wolbachia pipientis subsp. Culex pipiens (strain wPip).